The primary structure comprises 271 residues: MAGPQQQPPYLHLAELTASQFLEIWKHFDADGNGYIEGKELENFFQELEKARKGSGMMSKSDNFGEKMKEFMQKYDKNSDGKIEMAELAQILPTEENFLLCFRQHVGSSAEFMEAWRKYDTDRSGYIEANELKGFLSDLLKKANRPYDEPKLQEYTQTILRMFDLNGDGKLGLSEMSRLLPVQENFLLKFQGMKLTSEEFNAIFTFYDKDGSGYIDENELDALLKDLYEKNKKEMNIQQLTTYRKSVMSLAEAGKLYRKDLEIVLCSEPPV.

EF-hand domains are found at residues 16-51 (LTAS…LEKA), 63-98 (NFGE…EENF), 107-142 (GSSA…LLKK), 151-186 (KLQE…QENF), 195-230 (LTSE…LYEK), and 235-270 (MNIQ…SEPP). Positions 29, 31, 33, 35, 40, 76, 78, 80, 82, 87, 120, 122, 124, 126, 131, 164, 166, 168, 170, 175, 208, 210, 212, 214, and 219 each coordinate Ca(2+). At tyrosine 214 the chain carries Phosphotyrosine.

This sequence belongs to the calbindin family. In terms of tissue distribution, widely expressed in central nervous system. Expressed in type I unipolar brush cells of the cerebellum (at protein level).

The protein localises to the synapse. It localises to the cell projection. It is found in the dendrite. Functionally, calcium-binding protein involved in calcium homeostasis and signal transduction. It plays a critical role in buffering intracellular calcium levels and modulating calcium-dependent signaling pathways. Predominantly expressed in specific neuronal populations, influences synaptic plasticity and neuronal excitability, contributing to learning and memory. During embryonic development, it facilitates neuronal differentiation and maturation. This is Calretinin (Calb2) from Mus musculus (Mouse).